The primary structure comprises 477 residues: UDP-N-acetylmuramate--L-alanine ligase (477 aa).

125–131 (GTHGKTT) contributes to the ATP binding site.

The protein belongs to the MurCDEF family.

Its subcellular location is the cytoplasm. It catalyses the reaction UDP-N-acetyl-alpha-D-muramate + L-alanine + ATP = UDP-N-acetyl-alpha-D-muramoyl-L-alanine + ADP + phosphate + H(+). It functions in the pathway cell wall biogenesis; peptidoglycan biosynthesis. In terms of biological role, cell wall formation. The polypeptide is UDP-N-acetylmuramate--L-alanine ligase (Acidothermus cellulolyticus (strain ATCC 43068 / DSM 8971 / 11B)).